We begin with the raw amino-acid sequence, 482 residues long: Butyrophilin-like protein 2 (482 aa).

Over 1–6 (MVDFPG) the chain is Cytoplasmic. Residues 7 to 23 (YNLSGAVASFLFILLTM) traverse the membrane as a helical; Signal-anchor for type II membrane protein segment. Residues 24-482 (KQSEDFRVIG…VAVGLPRKRS (459 aa)) are Extracellular-facing. Ig-like V-type domains are found at residues 29–140 (FRVI…LLLK), 142–234 (AGLG…SVIS), and 236–355 (PEKL…ASLD). 3 cysteine pairs are disulfide-bonded: C50–C124, C164–C218, and C267–C341. Residue N210 is glycosylated (N-linked (GlcNAc...) asparagine). N427 carries N-linked (GlcNAc...) asparagine glycosylation.

Belongs to the immunoglobulin superfamily. BTN/MOG family. In terms of tissue distribution, expressed in brain, heart, kidney, liver, pancreas, ovary, leukocyte, small intestine, testis and thymus.

It is found in the membrane. Functionally, negative regulator of T-cell proliferation. This is Butyrophilin-like protein 2 from Homo sapiens (Human).